A 312-amino-acid polypeptide reads, in one-letter code: DNA-directed RNA polymerase subunit alpha (312 aa).

Positions 1-226 are alpha N-terminal domain (alpha-NTD); that stretch reads MIEFEKPNIT…EHLNLFTNLT (226 aa). The segment at 243–312 is alpha C-terminal domain (alpha-CTD); the sequence is DDRILERTIE…DLGLGLKNDK (70 aa).

Belongs to the RNA polymerase alpha chain family. In terms of assembly, homodimer. The RNAP catalytic core consists of 2 alpha, 1 beta, 1 beta' and 1 omega subunit. When a sigma factor is associated with the core the holoenzyme is formed, which can initiate transcription.

It carries out the reaction RNA(n) + a ribonucleoside 5'-triphosphate = RNA(n+1) + diphosphate. Functionally, DNA-dependent RNA polymerase catalyzes the transcription of DNA into RNA using the four ribonucleoside triphosphates as substrates. The chain is DNA-directed RNA polymerase subunit alpha from Streptococcus sanguinis (strain SK36).